A 137-amino-acid chain; its full sequence is Putative pre-16S rRNA nuclease (137 aa).

It belongs to the YqgF nuclease family.

Its subcellular location is the cytoplasm. Its function is as follows. Could be a nuclease involved in processing of the 5'-end of pre-16S rRNA. The chain is Putative pre-16S rRNA nuclease from Buchnera aphidicola subsp. Baizongia pistaciae (strain Bp).